The following is a 152-amino-acid chain: Large ribosomal subunit protein bL34c (152 aa).

A chloroplast-targeting transit peptide spans 1–91 (MATLSLLSTG…DRCRRFVVRA (91 aa)).

In terms of assembly, component of the chloroplast large ribosomal subunit (LSU). Mature 70S chloroplast ribosomes of higher plants consist of a small (30S) and a large (50S) subunit. The 30S small subunit contains 1 molecule of ribosomal RNA (16S rRNA) and 24 different proteins. The 50S large subunit contains 3 rRNA molecules (23S, 5S and 4.5S rRNA) and 33 different proteins.

The protein resides in the plastid. It localises to the chloroplast. Component of the chloroplast ribosome (chloro-ribosome), a dedicated translation machinery responsible for the synthesis of chloroplast genome-encoded proteins, including proteins of the transcription and translation machinery and components of the photosynthetic apparatus. This chain is Large ribosomal subunit protein bL34c (RPL34), found in Spinacia oleracea (Spinach).